Consider the following 333-residue polypeptide: Dipeptide transport system permease protein DppB (333 aa).

Transmembrane regions (helical) follow at residues 10–30 (LLLIPVLIGMTIVTFSIIHLI), 99–119 (IELTIFAMIFAIIIGVNAGIV), 130–150 (YLSMFIALVGVSMPIFWLALM), 197–217 (SIKHLILPGIALGTIPMAIIA), 256–276 (LIPVLTVVGLQTGNLLGGAIL), and 300–320 (PVIQSGILVVATIFVLINLFV). In terms of domain architecture, ABC transmembrane type-1 spans 95-324 (LAATIELTIF…LINLFVDLLY (230 aa)).

This sequence belongs to the binding-protein-dependent transport system permease family. OppBC subfamily.

Its subcellular location is the cell membrane. Its function is as follows. Probably part of the ABC transporter Dpp involved in dipeptide transport. Responsible for the translocation of the substrate across the membrane. This is Dipeptide transport system permease protein DppB (dppB) from Alkalihalophilus pseudofirmus (strain ATCC BAA-2126 / JCM 17055 / OF4) (Bacillus pseudofirmus).